The primary structure comprises 113 residues: Dynein light chain Tctex-type 1 (113 aa).

At Met-1 the chain carries N-acetylmethionine. An interaction with GNB1 region spans residues Gln-41–Ile-113.

It belongs to the dynein light chain Tctex-type family. Homodimer. The cytoplasmic dynein 1 complex consists of two catalytic heavy chains (HCs) and a number of non-catalytic subunits presented by intermediate chains (ICs), light intermediate chains (LICs) and light chains (LCs); the composition seems to vary in respect to the IC, LIC and LC composition. The heavy chain homodimer serves as a scaffold for the probable homodimeric assembly of the respective non-catalytic subunits. The ICs and LICs bind directly to the HC dimer and the LCs assemble on the IC dimer. DYNLT1 and DYNLT3 compete for association with dynein IC (DYNC1I1 or DYNC1I2). Self-associates. Interacts with RHO. Interacts with DYNC1I1 and DYNC1I2. Interacts with DOC2A, DOC2B and SCN10A. Interacts with PVR. Interacts with SVIL isoform 2. Interacts with GNB1; the interaction occurs in presence of guanine nucleotide-binding protein G(T) subunit gamma; the interaction diminishes the association of DYNLT1 with dynein IC (DYNC1I1 or DYNC1I2). Interacts with GNB2, GNB3 and GNB5; the interactions occur in presence of guanine nucleotide-binding protein G(T) subunit gamma. Interacts with ACVR2B and ARHGEF2. Interacts with DNAI4. Interacts with CFAP61. Post-translationally, phosphorylated by BMPR2. The phosphorylation status is proposed to regulate the association with the cytoplasmic dynein complex and may have role in cytoplasmic dynein cargo release. High level in testis (germ cell-specific). Expressed in sperm (at protein level). 200-fold lower in liver, brain, heart, spleen, and kidney. Levels in thymus and two embryonal carcinoma cell lines were several-fold higher than this low constitutive level.

It localises to the golgi apparatus. Its subcellular location is the cytoplasm. It is found in the cytoskeleton. The protein localises to the spindle. Its function is as follows. Acts as one of several non-catalytic accessory components of the cytoplasmic dynein 1 complex that are thought to be involved in linking dynein to cargos and to adapter proteins that regulate dynein function. Cytoplasmic dynein 1 acts as a motor for the intracellular retrograde motility of vesicles and organelles along microtubules. Binds to transport cargos and is involved in apical cargo transport such as rhodopsin-bearing vesicles in polarized epithelia. May also be a accessory component of axonemal dynein. Plays an important role in male germ cell development and function. Candidate for involvement in male sterility. Functionally, plays a role in neuronal morphogenesis; the function is independent of cytoplasmic dynein and seems to be coupled to regulation of the actin cytoskeleton by enhancing Rac1 activity. The function in neurogenesis may be regulated by association with a G-protein beta-gamma dimer. May function as a receptor-independent activator of heterotrimeric G-protein signaling; the activation appears to be independent of a nucleotide exchange. Plays a role in regulating neurogenesis; inhibits the genesis of neurons from precursor cells during cortical development presumably by antagonizing ARHGEF2. Unrelated to the role in retrograde microtubule-associated movement may play a role in the dimerization of cytoplasmic proteins/domains such as for ACVR2B. Binds to the cytoplasmic domain of ACVR2B and, in vitro, inhibits ACVR2B signaling. Involved in the regulation of mitotic spindle orientation. In Mus musculus (Mouse), this protein is Dynein light chain Tctex-type 1 (Dynlt1).